The following is a 336-amino-acid chain: NADH-quinone oxidoreductase subunit H (336 aa).

Helical transmembrane passes span 12 to 32 (FLKIVIVFSLALGIGAYLTWF), 84 to 104 (VVMALVPSILLLTIIPFGPGF), 118 to 138 (VNIALLLAFAFGSLSVYGTIF), 156 to 176 (AAVVIAYEVVLGFSVLGVILL), 193 to 213 (GVWFIFYQPVAFILYLFCMLA), 247 to 267 (LAEWYVNVIALSAIAVVLFFG), 274 to 294 (IFGPLSPYFWFVFKTFALVFF), and 313 to 333 (IAWKILLPIAILNVIITAVVV).

The protein belongs to the complex I subunit 1 family. As to quaternary structure, NDH-1 is composed of 14 different subunits. Subunits NuoA, H, J, K, L, M, N constitute the membrane sector of the complex.

The protein localises to the cell inner membrane. It carries out the reaction a quinone + NADH + 5 H(+)(in) = a quinol + NAD(+) + 4 H(+)(out). In terms of biological role, NDH-1 shuttles electrons from NADH, via FMN and iron-sulfur (Fe-S) centers, to quinones in the respiratory chain. The immediate electron acceptor for the enzyme in this species is believed to be ubiquinone. Couples the redox reaction to proton translocation (for every two electrons transferred, four hydrogen ions are translocated across the cytoplasmic membrane), and thus conserves the redox energy in a proton gradient. This subunit may bind ubiquinone. In Aquifex aeolicus (strain VF5), this protein is NADH-quinone oxidoreductase subunit H.